The sequence spans 1007 residues: Integrator complex subunit 8 (1007 aa).

The WFEF motif motif lies at 19–24 (WFEFLL). The span at 56 to 78 (TAQESVGTPGSDLQNLNQTPSNS) shows a compositional bias: polar residues. The interval 56–112 (TAQESVGTPGSDLQNLNQTPSNSGPIPGVVGGAPAPTTPTASGGVGMPHSPQRPAEK) is disordered. Residues 79–97 (GPIPGVVGGAPAPTTPTAS) show a composition bias toward low complexity.

The protein belongs to the Integrator subunit 8 family. Belongs to the multiprotein complex Integrator, at least composed of IntS1, IntS2, IntS3, IntS4, omd/IntS5, IntS6, defl/IntS7, IntS8, IntS9, IntS10, IntS11, IntS12, asun/IntS13, IntS14 and IntS15. The core complex associates with protein phosphatase 2A subunits mts/PP2A and Pp2A-29B, to form the Integrator-PP2A (INTAC) complex.

The protein localises to the nucleus. The protein resides in the chromosome. In terms of biological role, component of the integrator complex, a multiprotein complex that terminates RNA polymerase II (Pol II) transcription in the promoter-proximal region of genes. The integrator complex provides a quality checkpoint during transcription elongation by driving premature transcription termination of transcripts that are unfavorably configured for transcriptional elongation: the complex terminates transcription by (1) catalyzing dephosphorylation of the C-terminal domain (CTD) of Pol II subunit Polr2A/Rbp1 and Spt5, and (2) degrading the exiting nascent RNA transcript via endonuclease activity. The integrator complex is also involved in the 3'-end processing of the U7 snRNA, and also the spliceosomal snRNAs U1, U2, U4 and U5. Within the integrator complex, INTS8 is required for the recruitment of protein phosphatase 2A (PP2A) to transcription pause-release checkpoint. This is Integrator complex subunit 8 from Drosophila melanogaster (Fruit fly).